A 321-amino-acid polypeptide reads, in one-letter code: Glycerol-3-phosphate phosphatase (321 aa).

Catalysis depends on Asp34, which acts as the Nucleophile. 3 residues coordinate Mg(2+): Asp34, Asp36, and Asp260. Residue Asp36 is the Proton donor of the active site.

Belongs to the HAD-like hydrolase superfamily. CbbY/CbbZ/Gph/YieH family. Homodimer. Requires Mg(2+) as cofactor. As to expression, expression was confirmed in liver, adipose tissue, testis and pancreatic islet.

The enzyme catalyses O-phospho-L-tyrosyl-[protein] + H2O = L-tyrosyl-[protein] + phosphate. It catalyses the reaction sn-glycerol 1-phosphate + H2O = glycerol + phosphate. It carries out the reaction sn-glycerol 3-phosphate + H2O = glycerol + phosphate. Its function is as follows. Glycerol-3-phosphate phosphatase hydrolyzing glycerol-3-phosphate into glycerol. Thereby, regulates the cellular levels of glycerol-3-phosphate a metabolic intermediate of glucose, lipid and energy metabolism. Was also shown to have a 2-phosphoglycolate phosphatase activity and a tyrosine-protein phosphatase activity. However, their physiological relevance is unclear. In vitro, also has a phosphatase activity toward ADP, ATP, GDP and GTP. In Rattus norvegicus (Rat), this protein is Glycerol-3-phosphate phosphatase.